Here is a 462-residue protein sequence, read N- to C-terminus: Probable protein phosphatase 2C 1 (462 aa).

The region spanning 60-362 (SSCIFTQQGR…DDCAVVCLFL (303 aa)) is the PPM-type phosphatase domain. Residues Asp95, Gly96, Asp307, and Asp353 each coordinate Mn(2+). 2 disordered regions span residues 369–394 (ETSDNEEQCFSSATNAVESDESQGAE) and 421–443 (EADNAEKEKTREGEQNWSGLEGV). Positions 376-385 (QCFSSATNAV) are enriched in polar residues. Basic and acidic residues predominate over residues 424–434 (NAEKEKTREGE).

The protein belongs to the PP2C family. In terms of assembly, interacts with GCN5. Mg(2+) serves as cofactor. Requires Mn(2+) as cofactor.

The catalysed reaction is O-phospho-L-seryl-[protein] + H2O = L-seryl-[protein] + phosphate. It catalyses the reaction O-phospho-L-threonyl-[protein] + H2O = L-threonyl-[protein] + phosphate. In terms of biological role, may act as negative regulator of GCN5. This is Probable protein phosphatase 2C 1 (PPC6-6) from Arabidopsis thaliana (Mouse-ear cress).